The sequence spans 311 residues: Putative ribose-phosphate pyrophosphokinase 2 (311 aa).

Residues 38–40 (DGE) and 97–98 (RQ) each bind ATP. Mg(2+) is bound by residues His-131 and Asp-171. Asp-219 serves as a coordination point for D-ribose 5-phosphate.

The protein belongs to the ribose-phosphate pyrophosphokinase family. Class I subfamily. As to quaternary structure, homohexamer. It depends on Mg(2+) as a cofactor.

The protein resides in the cytoplasm. The enzyme catalyses D-ribose 5-phosphate + ATP = 5-phospho-alpha-D-ribose 1-diphosphate + AMP + H(+). Its pathway is metabolic intermediate biosynthesis; 5-phospho-alpha-D-ribose 1-diphosphate biosynthesis; 5-phospho-alpha-D-ribose 1-diphosphate from D-ribose 5-phosphate (route I): step 1/1. Its function is as follows. Involved in the biosynthesis of the central metabolite phospho-alpha-D-ribosyl-1-pyrophosphate (PRPP) via the transfer of pyrophosphoryl group from ATP to 1-hydroxyl of ribose-5-phosphate (Rib-5-P). The chain is Putative ribose-phosphate pyrophosphokinase 2 from Listeria innocua serovar 6a (strain ATCC BAA-680 / CLIP 11262).